The sequence spans 129 residues: Small ribosomal subunit protein uS11 (129 aa).

It belongs to the universal ribosomal protein uS11 family. In terms of assembly, part of the 30S ribosomal subunit. Interacts with proteins S7 and S18. Binds to IF-3.

Functionally, located on the platform of the 30S subunit, it bridges several disparate RNA helices of the 16S rRNA. Forms part of the Shine-Dalgarno cleft in the 70S ribosome. This chain is Small ribosomal subunit protein uS11, found in Nitratidesulfovibrio vulgaris (strain DSM 19637 / Miyazaki F) (Desulfovibrio vulgaris).